The chain runs to 509 residues: tRNA-2-methylthio-N(6)-dimethylallyladenosine synthase (509 aa).

Positions 1 to 15 (MNEQQRLASQQVNSS) are enriched in polar residues. Residues 1 to 26 (MNEQQRLASQQVNSSTKKEEKDYSKY) are disordered. The span at 16–25 (TKKEEKDYSK) shows a compositional bias: basic and acidic residues. The MTTase N-terminal domain occupies 66-184 (RKFYIRTYGC…LPYILKDAMF (119 aa)). [4Fe-4S] cluster contacts are provided by Cys75, Cys111, Cys145, Cys221, Cys225, and Cys228. In terms of domain architecture, Radical SAM core spans 207-437 (RRGDIKAWVN…NALVNKLAIE (231 aa)). The TRAM domain maps to 440–503 (DRYKGQIVEV…TWSLNGELVE (64 aa)).

Belongs to the methylthiotransferase family. MiaB subfamily. Monomer. Requires [4Fe-4S] cluster as cofactor.

Its subcellular location is the cytoplasm. The catalysed reaction is N(6)-dimethylallyladenosine(37) in tRNA + (sulfur carrier)-SH + AH2 + 2 S-adenosyl-L-methionine = 2-methylsulfanyl-N(6)-dimethylallyladenosine(37) in tRNA + (sulfur carrier)-H + 5'-deoxyadenosine + L-methionine + A + S-adenosyl-L-homocysteine + 2 H(+). Catalyzes the methylthiolation of N6-(dimethylallyl)adenosine (i(6)A), leading to the formation of 2-methylthio-N6-(dimethylallyl)adenosine (ms(2)i(6)A) at position 37 in tRNAs that read codons beginning with uridine. The sequence is that of tRNA-2-methylthio-N(6)-dimethylallyladenosine synthase from Bacillus cereus (strain ZK / E33L).